A 218-amino-acid polypeptide reads, in one-letter code: Claudin-5 (218 aa).

Residues 1–7 lie on the Cytoplasmic side of the membrane; it reads MGSAALE. The chain crosses the membrane as a helical span at residues 8-28; sequence ILGLVLCLVGWGGLILACGLP. Topologically, residues 29–81 are extracellular; the sequence is MWQVTAFLDHNIVTAQTTWKGLWMSCVVQSTGHMQCKVYDSVLALSTEVQAAR. A helical membrane pass occupies residues 82-102; the sequence is ALTVSAVLLAFVALFVTLAGA. The Cytoplasmic portion of the chain corresponds to 103–122; it reads QCTTCVAPGPAKARVALTGG. Residues 123–143 form a helical membrane-spanning segment; it reads VLYLFCGLLALVPLCWFANIV. Residues 144 to 159 lie on the Extracellular side of the membrane; it reads VREFYDPSVPVSQKYE. A helical transmembrane segment spans residues 160-180; that stretch reads LGAALYIGWAATALLMVGGCL. Residues 181–218 are Cytoplasmic-facing; the sequence is LCCGAWVCTGRPDLSFPVKYSAPRRPTATGDYDKKNYV. Positions 217 to 218 are interactions with TJP1, TJP2 and TJP3; it reads YV.

This sequence belongs to the claudin family. As to quaternary structure, directly interacts with TJP1/ZO-1, TJP2/ZO-2 and TJP3/ZO-3. Interacts with MPDZ.

It is found in the cell junction. The protein localises to the tight junction. The protein resides in the cell membrane. In terms of biological role, plays a major role in tight junction-specific obliteration of the intercellular space. This chain is Claudin-5 (CLDN5), found in Homo sapiens (Human).